Consider the following 115-residue polypeptide: General stress protein 17M (115 aa).

This is General stress protein 17M (yflT) from Bacillus subtilis (strain 168).